A 248-amino-acid polypeptide reads, in one-letter code: tRNA (guanine-N(7)-)-methyltransferase (248 aa).

S-adenosyl-L-methionine-binding residues include E80, E105, D132, and D155. The active site involves D155. Residues K159, D191, and 223-226 each bind substrate; that span reads TKFE.

It belongs to the class I-like SAM-binding methyltransferase superfamily. TrmB family.

The enzyme catalyses guanosine(46) in tRNA + S-adenosyl-L-methionine = N(7)-methylguanosine(46) in tRNA + S-adenosyl-L-homocysteine. The protein operates within tRNA modification; N(7)-methylguanine-tRNA biosynthesis. In terms of biological role, catalyzes the formation of N(7)-methylguanine at position 46 (m7G46) in tRNA. The polypeptide is tRNA (guanine-N(7)-)-methyltransferase (Nocardioides sp. (strain ATCC BAA-499 / JS614)).